A 674-amino-acid polypeptide reads, in one-letter code: Protein asunder (674 aa).

A coiled-coil region spans residues 516–538 (HKAKDQYRLLYRELEQLIQLNAS). Residues 560 to 579 (PSKSEAGTANLRSFTESPLS) form a disordered region. The span at 564–577 (EAGTANLRSFTESP) shows a compositional bias: polar residues. A Nuclear localization signal (NLS) motif is present at residues 601–607 (LKASKRR).

The protein belongs to the Integrator subunit 13 family. Belongs to the multiprotein complex Integrator, at least composed of IntS1, IntS2, IntS3, IntS4, omd/IntS5, IntS6, defl/IntS7, IntS8, IntS9, IntS10, IntS11, IntS12, asun/IntS13, IntS14 and IntS15. The core complex associates with protein phosphatase 2A subunits mts/PP2A and Pp2A-29B, to form the Integrator-PP2A (INTAC) complex. In terms of processing, phosphorylated.

Its subcellular location is the nucleus. It localises to the cytoplasm. The protein resides in the perinuclear region. In terms of biological role, component of the integrator complex, a multiprotein complex that terminates RNA polymerase II (Pol II) transcription in the promoter-proximal region of genes. The integrator complex provides a quality checkpoint during transcription elongation by driving premature transcription termination of transcripts that are unfavorably configured for transcriptional elongation: the complex terminates transcription by (1) catalyzing dephosphorylation of the C-terminal domain (CTD) of Pol II subunit Polr2A/Rbp1 and Spt5, and (2) degrading the exiting nascent RNA transcript via endonuclease activity. The integrator complex is also involved in the 3'-end processing of the U7 snRNA, and also the spliceosomal snRNAs U1, U2, U4 and U5. The protein is Protein asunder (asun) of Drosophila pseudoobscura pseudoobscura (Fruit fly).